The following is a 187-amino-acid chain: Peptidyl-tRNA hydrolase (187 aa).

A tRNA-binding site is contributed by Tyr18. His23 serves as the catalytic Proton acceptor. The tRNA site is built by Phe65, Asn67, and Asn113.

This sequence belongs to the PTH family. Monomer.

Its subcellular location is the cytoplasm. The catalysed reaction is an N-acyl-L-alpha-aminoacyl-tRNA + H2O = an N-acyl-L-amino acid + a tRNA + H(+). Functionally, hydrolyzes ribosome-free peptidyl-tRNAs (with 1 or more amino acids incorporated), which drop off the ribosome during protein synthesis, or as a result of ribosome stalling. Catalyzes the release of premature peptidyl moieties from peptidyl-tRNA molecules trapped in stalled 50S ribosomal subunits, and thus maintains levels of free tRNAs and 50S ribosomes. This chain is Peptidyl-tRNA hydrolase, found in Coxiella burnetii (strain RSA 331 / Henzerling II).